Reading from the N-terminus, the 199-residue chain is Putative ATP-dependent Clp protease proteolytic subunit-like (199 aa).

This sequence belongs to the peptidase S14 family. As to quaternary structure, component of the chloroplastic Clp protease core complex.

It localises to the plastid. Its subcellular location is the cyanelle. Functionally, has lost the two conserved residues (Ser and His) proposed to be part of the active site. Therefore it could be inactive. The sequence is that of Putative ATP-dependent Clp protease proteolytic subunit-like (clpP-B) from Cyanophora paradoxa.